Reading from the N-terminus, the 95-residue chain is uncharacterized protein (95 aa).

This is an uncharacterized protein from Archaeoglobus fulgidus (strain ATCC 49558 / DSM 4304 / JCM 9628 / NBRC 100126 / VC-16).